We begin with the raw amino-acid sequence, 354 residues long: Soluble interferon alpha/beta receptor OPG204 (354 aa).

An N-terminal signal peptide occupies residues 1–22; the sequence is MMKMTMKMMVHIYFVSLLLLLF. Ig-like C2-type domains lie at 68–150 and 158–240; these read IGEP…RSHV and PEIY…IVVS. Cystine bridges form between C76-C132 and C175-C224. N-linked (GlcNAc...) asparagine; by host glycosylation is found at N120, N124, N185, N272, and N324. The Ig-like V-type domain maps to 249 to 348; the sequence is PSQDHRFKLI…HNYYFEKTLT (100 aa). The cysteines at positions 275 and 336 are disulfide-linked.

The protein belongs to the interleukin-1 receptor family. In terms of assembly, interacts with host IFNA1.

It is found in the secreted. Functionally, counteracts the antiviral effects of host IFN-alpha/beta and key IFN-inducible proteins involved in viral RNA degradation suxh as host OAS1. Acts as a soluble IFN-alpha receptor and thus inhibits the interaction between host IFN-alpha and its receptor. This is Soluble interferon alpha/beta receptor OPG204 (OPG204) from Homo sapiens (Human).